Here is a 299-residue protein sequence, read N- to C-terminus: Nucleotide-binding protein AFE_3021 (299 aa).

ATP is bound at residue 11 to 18 (GLSGSGKS). Residue 62–65 (DVRN) coordinates GTP.

It belongs to the RapZ-like family.

Displays ATPase and GTPase activities. In Acidithiobacillus ferrooxidans (strain ATCC 23270 / DSM 14882 / CIP 104768 / NCIMB 8455) (Ferrobacillus ferrooxidans (strain ATCC 23270)), this protein is Nucleotide-binding protein AFE_3021.